A 647-amino-acid polypeptide reads, in one-letter code: Protein RAD61 (647 aa).

The disordered stretch occupies residues 1–90; it reads MRAYGKRGPV…QLDSKRNDQN (90 aa). Residues 66–82 show a composition bias toward polar residues; the sequence is DSSSSFDGANEKPSSQL.

It localises to the nucleus. Involved in resistance to ionizing radiation. The sequence is that of Protein RAD61 (RAD61) from Saccharomyces cerevisiae (strain ATCC 204508 / S288c) (Baker's yeast).